Consider the following 341-residue polypeptide: Solute carrier family 25 member 43 (341 aa).

3 Solcar repeats span residues 11–101, 105–185, and 200–298; these read TGSQ…MDDL, SQWS…LLVY, and SHLQ…LYQN. The next 6 helical transmembrane spans lie at 16–36, 68–88, 110–130, 166–186, 205–225, and 262–282; these read LLCA…LELA, LWKG…VQLA, IVTG…TDLI, GVSL…LVYM, FANV…FDTV, and VLGL…YFGV.

This sequence belongs to the mitochondrial carrier (TC 2.A.29) family.

It localises to the mitochondrion inner membrane. The polypeptide is Solute carrier family 25 member 43 (Slc25a43) (Mus musculus (Mouse)).